Consider the following 370-residue polypeptide: A-type ATP synthase subunit C (370 aa).

This sequence belongs to the V-ATPase V0D/AC39 subunit family. Has multiple subunits with at least A(3), B(3), C, D, E, F, H, I and proteolipid K(x).

Its subcellular location is the cell membrane. Its function is as follows. Component of the A-type ATP synthase that produces ATP from ADP in the presence of a proton gradient across the membrane. This is A-type ATP synthase subunit C from Pyrococcus furiosus (strain ATCC 43587 / DSM 3638 / JCM 8422 / Vc1).